A 422-amino-acid chain; its full sequence is Vitamin D3 receptor (422 aa).

Residues 22–90 (PRICGVCGDK…RLKRCVDIGM (69 aa)) constitute a DNA-binding region (nuclear receptor). Zn(2+) contacts are provided by cysteine 25, cysteine 28, cysteine 42, cysteine 45, cysteine 61, cysteine 67, cysteine 77, and cysteine 80. 2 consecutive NR C4-type zinc fingers follow at residues 25 to 45 (CGVCGDKATGFHFNAMTCEGC) and 61 to 85 (CPFNGDCRITKDNRRHCQSCRLKRC). A hinge region spans residues 98–127 (DEEVQRKRQMINKRKSEEALKESMRPKISD). The 291-residue stretch at 128–418 (EQQKMIDILL…LTPLMLEVFS (291 aa)) folds into the NR LBD domain. Positions 170 to 191 (RSSSVHTQGSPSEDSDVFTSSP) are disordered. Serine 232 contributes to the calcitriol binding site. The interaction with coactivator LXXLL motif stretch occupies residues 241 to 259 (KMIPGFRDLIAEDQIALLK). Residues arginine 269, serine 273, histidine 300, and histidine 392 each coordinate calcitriol. The short motif at 411 to 419 (PLMLEVFSD) is the 9aaTAD element.

This sequence belongs to the nuclear hormone receptor family. NR1 subfamily. As to quaternary structure, homodimer in the absence of bound vitamin D3. Heterodimer with RXRA after vitamin D3 binding. As to expression, detected in all tissues examined. Highest level in small intestine and skin.

The protein localises to the nucleus. It is found in the cytoplasm. Functionally, nuclear receptor for calcitriol, the active form of vitamin D3 which mediates the action of this vitamin on cells. Enters the nucleus upon vitamin D3 binding where it forms heterodimers with the retinoid X receptor/RXR. The VDR-RXR heterodimers bind to specific response elements on DNA and activate the transcription of vitamin D3-responsive target genes. Plays a central role in calcium homeostasis. Also functions as a receptor for the secondary bile acid lithocholic acid (LCA) and its metabolites. The chain is Vitamin D3 receptor (vdr) from Xenopus laevis (African clawed frog).